Reading from the N-terminus, the 314-residue chain is Fibrinogen-like protein 1 (314 aa).

Residues 1–22 form the signal peptide; it reads MGEIRSFVLITVALILGKESWV. Residues 28–62 are a coiled coil; sequence CLQEQVRLRAQVRQLETRVKQQQVVIAQLLHEKEV. Positions 76–308 constitute a Fibrinogen C-terminal domain; it reads LGGKRHYADC…SVVMKIRPSD (233 aa). Intrachain disulfides connect Cys-85–Cys-114 and Cys-250–Cys-263.

Homodimer. Interacts (via the Fibrinogen C-terminal domain) with LAG3 (via Ig-like domains 1 and 2).

The protein localises to the secreted. Its function is as follows. Immune suppressive molecule that inhibits antigen-specific T-cell activation by acting as a major ligand of LAG3. Responsible for LAG3 T-cell inhibitory function. Binds LAG3 independently from MHC class II (MHC-II). Secreted by, and promotes growth of, hepatocytes. The sequence is that of Fibrinogen-like protein 1 from Rattus norvegicus (Rat).